Reading from the N-terminus, the 495-residue chain is Probable cytosol aminopeptidase (495 aa).

2 residues coordinate Mn(2+): Lys-266 and Asp-271. Lys-278 is an active-site residue. Mn(2+)-binding residues include Asp-289, Asp-348, and Glu-350. Arg-352 is an active-site residue.

It belongs to the peptidase M17 family. Mn(2+) serves as cofactor.

The protein resides in the cytoplasm. The catalysed reaction is Release of an N-terminal amino acid, Xaa-|-Yaa-, in which Xaa is preferably Leu, but may be other amino acids including Pro although not Arg or Lys, and Yaa may be Pro. Amino acid amides and methyl esters are also readily hydrolyzed, but rates on arylamides are exceedingly low.. The enzyme catalyses Release of an N-terminal amino acid, preferentially leucine, but not glutamic or aspartic acids.. Presumably involved in the processing and regular turnover of intracellular proteins. Catalyzes the removal of unsubstituted N-terminal amino acids from various peptides. The protein is Probable cytosol aminopeptidase of Pseudomonas aeruginosa (strain LESB58).